We begin with the raw amino-acid sequence, 164 residues long: Protein DOWNSTREAM OF FLC (164 aa).

The N-terminal stretch at 1-23 is a signal peptide; sequence MAKSFVPLIAVLCVLVLPLAAMA. 3 cysteine pairs are disulfide-bonded: C36–C107, C39–C148, and C60–C95.

It belongs to the Ole e I family.

The protein resides in the secreted. In terms of biological role, part of a three-gene cluster containing FLC, UFC and DFC, which is coordinately regulated in response to vernalization. Not regulated by FLX. The sequence is that of Protein DOWNSTREAM OF FLC (DFC) from Arabidopsis thaliana (Mouse-ear cress).